The chain runs to 104 residues: UPF0145 protein STH1265 (104 aa).

The protein belongs to the UPF0145 family.

This is UPF0145 protein STH1265 from Symbiobacterium thermophilum (strain DSM 24528 / JCM 14929 / IAM 14863 / T).